A 351-amino-acid chain; its full sequence is 1-aminocyclopropane-1-carboxylate oxidase homolog 4 (351 aa).

Residues Lys-200–Ala-304 form the Fe2OG dioxygenase domain. His-224, Asp-226, and His-280 together coordinate Fe cation. Residue Arg-291 participates in 2-oxoglutarate binding.

Belongs to the iron/ascorbate-dependent oxidoreductase family. Fe(2+) is required as a cofactor.

This Arabidopsis thaliana (Mouse-ear cress) protein is 1-aminocyclopropane-1-carboxylate oxidase homolog 4.